Consider the following 185-residue polypeptide: Protein-arginine kinase activator protein (185 aa).

Phosphoarginine occurs at positions 115 and 169. One can recognise a UVR domain in the interval R139–S174.

As to quaternary structure, interacts with McsB. Post-translationally, phosphorylated on Arg residues by McsB.

Its function is as follows. Activates the phosphorylation activity of the protein-arginine kinase McsB. Is required for the delocalization of competence proteins from the cell poles. The sequence is that of Protein-arginine kinase activator protein (mcsA) from Bacillus subtilis (strain 168).